A 203-amino-acid chain; its full sequence is High frequency lysogenization protein HflD homolog (203 aa).

The protein belongs to the HflD family.

It localises to the cytoplasm. The protein localises to the cell inner membrane. This Pasteurella multocida (strain Pm70) protein is High frequency lysogenization protein HflD homolog.